The primary structure comprises 445 residues: tRNA(Ile)-lysidine synthase (445 aa).

Residue 19 to 24 (SGGIDS) coordinates ATP.

Belongs to the tRNA(Ile)-lysidine synthase family.

The protein localises to the cytoplasm. The catalysed reaction is cytidine(34) in tRNA(Ile2) + L-lysine + ATP = lysidine(34) in tRNA(Ile2) + AMP + diphosphate + H(+). In terms of biological role, ligates lysine onto the cytidine present at position 34 of the AUA codon-specific tRNA(Ile) that contains the anticodon CAU, in an ATP-dependent manner. Cytidine is converted to lysidine, thus changing the amino acid specificity of the tRNA from methionine to isoleucine. This is tRNA(Ile)-lysidine synthase from Buchnera aphidicola subsp. Schizaphis graminum (strain Sg).